Here is a 411-residue protein sequence, read N- to C-terminus: Elongation factor Tu, apicoplast (411 aa).

The region spanning 10 to 214 is the tr-type G domain; sequence KPHVNIGTIG…TVDSYIEKPE (205 aa). Residues 19–26 form a G1 region; the sequence is GHVDHGKT. 19–26 is a binding site for GTP; sequence GHVDHGKT. Threonine 26 lines the Mg(2+) pocket. Positions 61–65 are G2; it reads GITIN. Residues 82 to 85 are G3; the sequence is DCPG. GTP is bound by residues 82 to 86 and 137 to 140; these read DCPGH and NKED. The G4 stretch occupies residues 137–140; sequence NKED. Residues 175 to 177 form a G5 region; sequence SAL.

It belongs to the TRAFAC class translation factor GTPase superfamily. Classic translation factor GTPase family. EF-Tu/EF-1A subfamily.

It is found in the plastid. Its subcellular location is the apicoplast. The catalysed reaction is GTP + H2O = GDP + phosphate + H(+). In terms of biological role, GTP hydrolase that promotes the GTP-dependent binding of aminoacyl-tRNA to the A-site of ribosomes during protein biosynthesis. This Theileria parva (East coast fever infection agent) protein is Elongation factor Tu, apicoplast (tufA).